A 339-amino-acid polypeptide reads, in one-letter code: Putative phosphate acyltransferase (339 aa).

It belongs to the PlsX family. Homodimer. Probably interacts with PlsY.

The protein resides in the cytoplasm. It carries out the reaction a fatty acyl-[ACP] + phosphate = an acyl phosphate + holo-[ACP]. It functions in the pathway lipid metabolism; phospholipid metabolism. Its function is as follows. Catalyzes the reversible formation of acyl-phosphate (acyl-PO(4)) from acyl-[acyl-carrier-protein] (acyl-ACP). This enzyme utilizes acyl-ACP as fatty acyl donor, but not acyl-CoA. This chain is Putative phosphate acyltransferase, found in Clostridium perfringens (strain 13 / Type A).